The primary structure comprises 225 residues: uncharacterized protein (225 aa).

The protein belongs to the mimivirus L31/R44 family.

This is an uncharacterized protein from Acanthamoeba polyphaga (Amoeba).